The sequence spans 2561 residues: Squalestatin hexaketide synthase (2561 aa).

Positions 1-77 (MDVSKEEGQR…NGTTNITPEF (77 aa)) are disordered. Positions 20–74 (NETTNGHTNGYTNGHTNGHTNGTTNATTNGTTNGTMNGTTNGTTNRTTNGTTNIT) are enriched in low complexity. In terms of domain architecture, Ketosynthase family 3 (KS3) spans 83 to 503 (QVPVAICGIG…GSNTHIIIDS (421 aa)). Residues Cys253, His390, and His427 each act as for beta-ketoacyl synthase activity in the active site. Residues 603–925 (FIFTGQGAQW…LEAIGKLFCF (323 aa)) are malonyl-CoA:ACP transacylase (MAT) domain. The N-terminal hotdog fold stretch occupies residues 972–1101 (HELLGERSLE…GLVTASVVIS (130 aa)). The segment at 972–1253 (HELLGERSLE…RGFKCKRTDE (282 aa)) is dehydratase (DH) domain. The PKS/mFAS DH domain maps to 972 to 1257 (HELLGERSLE…CKRTDESFIQ (286 aa)). The active-site Proton acceptor; for dehydratase activity is the His1004. The interval 1112–1257 (TFPRKVDTSR…CKRTDESFIQ (146 aa)) is C-terminal hotdog fold. The active-site Proton donor; for dehydratase activity is the Asp1174. Residues 1421-1599 (SFFQAAGLNK…GFEGAGTVVL (179 aa)) are methyltransferase (CMet) domain. The segment at 1826–2146 (GMLNTLHWVG…RGVHMGRIVV (321 aa)) is enoyl reductase (ER) (ER) domain. The ketoreductase (KR) domain stretch occupies residues 2170-2343 (STYLLTGGMG…PASVIDIAAI (174 aa)). Positions 2472–2550 (VLFAQEIAKR…SLGRLATKRL (79 aa)) constitute a Carrier domain. An O-(pantetheine 4'-phosphoryl)serine modification is found at Ser2509.

It functions in the pathway secondary metabolite biosynthesis. In terms of biological role, highly reducing polyketide synthase (HR-PKS); part of the gene cluster that mediates the biosynthesis of squalestatin S1 (SQS1, also known as zaragozic acid A), a heavily oxidized fungal polyketide that offers potent cholesterol lowering activity by targeting squalene synthase (SS). SQS1 is composed of a 2,8-dioxobicyclic[3.2.1]octane-3,4,5-tricarboxyclic acid core that is connected to two lipophilic polyketide arms. These initial steps feature the priming of an unusual benzoic acid starter unit onto the highly reducing polyketide synthase pks2, followed by oxaloacetate extension and product release to generate a tricarboxylic acid containing product. The phenylalanine ammonia lyase (PAL) M7 and the acyl-CoA ligase M9 are involved in transforming phenylalanine into benzoyl-CoA. The citrate synthase-like protein R3 is involved in connecting the C-alpha-carbons of the hexaketide chain and oxaloacetate to afford the tricarboxylic acid unit. The potential hydrolytic enzymes, M8 and M10, are in close proximity to pks2 and may participate in product release. On the other side, the tetraketide arm is synthesized by a the squalestatin tetraketide synthase pks1 and enzymatically esterified to the core in the last biosynthetic step, by the acetyltransferase M4. The biosynthesis of the tetraketide must involve 3 rounds of chain extension. After the first and second rounds methyl-transfer occurs, and in all rounds of extension the ketoreductase and dehydratase are active. The enoyl reductase and C-MeT of pks1 are not active in the final round of extension. The acetyltransferase M4 appears to have a broad substrate selectivity for its acyl CoA substrate, allowing the in vitro synthesis of novel squalestatins. The biosynthesis of SQS1 requires several oxidative steps likely performed by oxidoreductases M1, R1 and R2. Finally, in support of the identification of the cluster as being responsible for SQS1 production, the cluster contains a gene encoding a putative squalene synthase (SS) R6, suggesting a likely mechanism for self-resistance. This is Squalestatin hexaketide synthase from Phoma sp. (strain ATCC 20986 / MF5453).